Reading from the N-terminus, the 410-residue chain is Phospho-N-acetylmuramoyl-pentapeptide-transferase (410 aa).

Transmembrane regions (helical) follow at residues Y23–G43, T73–A93, H96–V116, G132–F152, W215–A235, T248–F268, V285–A305, V307–A327, I332–V352, and K387–L407.

Belongs to the glycosyltransferase 4 family. MraY subfamily. It depends on Mg(2+) as a cofactor.

It localises to the cell inner membrane. The catalysed reaction is UDP-N-acetyl-alpha-D-muramoyl-L-alanyl-gamma-D-glutamyl-meso-2,6-diaminopimeloyl-D-alanyl-D-alanine + di-trans,octa-cis-undecaprenyl phosphate = di-trans,octa-cis-undecaprenyl diphospho-N-acetyl-alpha-D-muramoyl-L-alanyl-D-glutamyl-meso-2,6-diaminopimeloyl-D-alanyl-D-alanine + UMP. It participates in cell wall biogenesis; peptidoglycan biosynthesis. Its function is as follows. Catalyzes the initial step of the lipid cycle reactions in the biosynthesis of the cell wall peptidoglycan: transfers peptidoglycan precursor phospho-MurNAc-pentapeptide from UDP-MurNAc-pentapeptide onto the lipid carrier undecaprenyl phosphate, yielding undecaprenyl-pyrophosphoryl-MurNAc-pentapeptide, known as lipid I. This is Phospho-N-acetylmuramoyl-pentapeptide-transferase from Flavobacterium johnsoniae (strain ATCC 17061 / DSM 2064 / JCM 8514 / BCRC 14874 / CCUG 350202 / NBRC 14942 / NCIMB 11054 / UW101) (Cytophaga johnsonae).